A 439-amino-acid chain; its full sequence is MNKYFENVSKIKYEGPKSNNPYSFKFYNPEEVIDGKTMEEHLRFSIAYWHTFTADGTDQFGKATMQRPWNHYTDPMDIAKRRVEAAFEFFDKINAPFFCFHDRDIAPEGDTLRETNKNLDTIVAMIKDYLKTSKTKVLWGTANLFSNPRFVHGASTSCNADVFAYSAAQVKKALEITKELGRENYVFWGGREGYETLLNTDMELELDNFARFLHMAVDYAKEIGFEGQFLIEPKPKEPTKHQYDFDVANVLAFLRKYDLDKYFKVNIEANHATLAFHDFQHELRYARINGVLGSIDANTGDMLLGWDTDQFPTDIRMTTLAMYEVIKMGGFDKGGLNFDAKVRRASFEPEDLFLGHIAGMDAFAKGFKVAYKLVKDGVFDKFIEERYASYKEGIGADIVSGKADFKSLEKYALEHSQIVNKSGRQELLESILNQYLFAE.

Catalysis depends on residues His101 and Asp104. Positions 232, 268, 271, 296, 307, 309, and 339 each coordinate Mg(2+).

This sequence belongs to the xylose isomerase family. Homotetramer. It depends on Mg(2+) as a cofactor.

It is found in the cytoplasm. The catalysed reaction is alpha-D-xylose = alpha-D-xylulofuranose. This chain is Xylose isomerase (xylA), found in Thermoanaerobacterium saccharolyticum.